A 627-amino-acid chain; its full sequence is Membrane protein insertase YidC (627 aa).

A helical transmembrane segment spans residues 8–28 (LFLALILSMGIWMGVNYFFFP). Positions 33–57 (KKNTETKQTQSDKTSENTKQQITSG) are enriched in polar residues. Residues 33–68 (KKNTETKQTQSDKTSENTKQQITSGKTKESNSADPV) form a disordered region. Residues 58–68 (KTKESNSADPV) are compositionally biased toward basic and acidic residues. Helical transmembrane passes span 417–437 (FTIP…KLVF), 488–508 (VGGC…YTAF), 536–556 (AIPY…LMVG), and 575–595 (MLMY…PSGV).

The protein belongs to the OXA1/ALB3/YidC family. Type 1 subfamily. Interacts with the Sec translocase complex via SecD. Specifically interacts with transmembrane segments of nascent integral membrane proteins during membrane integration.

It localises to the cell inner membrane. Its function is as follows. Required for the insertion and/or proper folding and/or complex formation of integral membrane proteins into the membrane. Involved in integration of membrane proteins that insert both dependently and independently of the Sec translocase complex, as well as at least some lipoproteins. Aids folding of multispanning membrane proteins. In Leptospira interrogans serogroup Icterohaemorrhagiae serovar Lai (strain 56601), this protein is Membrane protein insertase YidC.